We begin with the raw amino-acid sequence, 532 residues long: Phosphoenolpyruvate carboxykinase (ATP) (532 aa).

Residues Arg-60, Tyr-194, and Lys-200 each coordinate substrate. Residues Lys-200, His-219, and 237 to 245 each bind ATP; that span reads GLSGTGKTT. Positions 200 and 219 each coordinate Mn(2+). Asp-258 provides a ligand contact to Mn(2+). Residues Glu-286, Arg-324, and Thr-449 each contribute to the ATP site. Residue Arg-324 participates in substrate binding.

Belongs to the phosphoenolpyruvate carboxykinase (ATP) family. Mn(2+) serves as cofactor.

It is found in the cytoplasm. The catalysed reaction is oxaloacetate + ATP = phosphoenolpyruvate + ADP + CO2. Its pathway is carbohydrate biosynthesis; gluconeogenesis. Functionally, involved in the gluconeogenesis. Catalyzes the conversion of oxaloacetate (OAA) to phosphoenolpyruvate (PEP) through direct phosphoryl transfer between the nucleoside triphosphate and OAA. This Ruegeria sp. (strain TM1040) (Silicibacter sp.) protein is Phosphoenolpyruvate carboxykinase (ATP).